The sequence spans 342 residues: uncharacterized protein (342 aa).

This is an uncharacterized protein from Magallana gigas (Pacific oyster).